The sequence spans 235 residues: Probable transcriptional regulatory protein JJD26997_0557 (235 aa).

It belongs to the TACO1 family.

It is found in the cytoplasm. The sequence is that of Probable transcriptional regulatory protein JJD26997_0557 from Campylobacter jejuni subsp. doylei (strain ATCC BAA-1458 / RM4099 / 269.97).